The primary structure comprises 493 residues: Probable polyol transporter 6 (493 aa).

12 helical membrane passes run 25–45 (SIVS…MVFI), 54–74 (VQIE…SLLA), 85–105 (YTIV…GWGP), 116–136 (TAGL…AEIA), 142–162 (GLLA…GYIV), 177–197 (LMLG…LKMP), 275–295 (VLLT…EAVL), 313–333 (LFLV…TATL), 343–363 (LLLT…FGLT), 372–392 (LAWA…FFSI), 414–434 (GASL…MSFL), and 444–464 (GAFF…FFLL).

It belongs to the major facilitator superfamily. Sugar transporter (TC 2.A.1.1) family.

Its subcellular location is the membrane. Its function is as follows. Plasma membrane sugar-proton symporter. This Arabidopsis thaliana (Mouse-ear cress) protein is Probable polyol transporter 6 (PLT6).